The chain runs to 246 residues: N-alpha-acetyltransferase 11 (246 aa).

Positions 1–58 (MNIRNARPEDLMNMQHCNLLCLPENYQMKYYFYHGLSWPQLSYIAEDEDGKIVGYVLA) are interaction with NAA15. The 152-residue stretch at 1-152 (MNIRNARPED…DAYAMKRDLA (152 aa)) folds into the N-acetyltransferase domain. The disordered stretch occupies residues 175–246 (EENQEAQDST…DSSEYLDSTS (72 aa)). The segment covering 230-246 (SHSTDVQDSSEYLDSTS) has biased composition (polar residues).

The protein belongs to the acetyltransferase family. ARD1 subfamily. As to quaternary structure, component of the N-terminal acetyltransferase A (NatA) complex composed of NAA11 and NAA15. Interacts with HIF1A.

Its subcellular location is the cytoplasm. It is found in the nucleus. It carries out the reaction N-terminal glycyl-[protein] + acetyl-CoA = N-terminal N(alpha)-acetylglycyl-[protein] + CoA + H(+). The catalysed reaction is N-terminal L-alanyl-[protein] + acetyl-CoA = N-terminal N(alpha)-acetyl-L-alanyl-[protein] + CoA + H(+). The enzyme catalyses N-terminal L-seryl-[protein] + acetyl-CoA = N-terminal N(alpha)-acetyl-L-seryl-[protein] + CoA + H(+). It catalyses the reaction N-terminal L-valyl-[protein] + acetyl-CoA = N-terminal N(alpha)-acetyl-L-valyl-[protein] + CoA + H(+). It carries out the reaction N-terminal L-cysteinyl-[protein] + acetyl-CoA = N-terminal N(alpha)-acetyl-L-cysteinyl-[protein] + CoA + H(+). The catalysed reaction is N-terminal L-threonyl-[protein] + acetyl-CoA = N-terminal N(alpha)-acetyl-L-threonyl-[protein] + CoA + H(+). In terms of biological role, displays alpha (N-terminal) acetyltransferase activity. Proposed alternative catalytic subunit of the N-terminal acetyltransferase A (NatA) complex. The sequence is that of N-alpha-acetyltransferase 11 (Naa11) from Rattus norvegicus (Rat).